The chain runs to 87 residues: uncharacterized protein (87 aa).

The next 2 membrane-spanning stretches (helical) occupy residues 7–27 and 64–84; these read LFFI…LYSI and GINI…IPLF.

The protein resides in the membrane. This is an uncharacterized protein from Schizosaccharomyces pombe (strain 972 / ATCC 24843) (Fission yeast).